Reading from the N-terminus, the 386-residue chain is Succinate--CoA ligase [ADP-forming] subunit beta (386 aa).

The ATP-grasp domain maps to 9 to 244 (KAVLRSYGVS…LDEEDSKEIE (236 aa)). Residues lysine 46, 53-55 (GRG), glutamate 99, cysteine 102, and glutamate 107 contribute to the ATP site. Mg(2+)-binding residues include asparagine 199 and aspartate 213. Substrate contacts are provided by residues asparagine 264 and 321–323 (GIM).

It belongs to the succinate/malate CoA ligase beta subunit family. In terms of assembly, heterotetramer of two alpha and two beta subunits. Mg(2+) is required as a cofactor.

The catalysed reaction is succinate + ATP + CoA = succinyl-CoA + ADP + phosphate. It carries out the reaction GTP + succinate + CoA = succinyl-CoA + GDP + phosphate. It functions in the pathway carbohydrate metabolism; tricarboxylic acid cycle; succinate from succinyl-CoA (ligase route): step 1/1. Its function is as follows. Succinyl-CoA synthetase functions in the citric acid cycle (TCA), coupling the hydrolysis of succinyl-CoA to the synthesis of either ATP or GTP and thus represents the only step of substrate-level phosphorylation in the TCA. The beta subunit provides nucleotide specificity of the enzyme and binds the substrate succinate, while the binding sites for coenzyme A and phosphate are found in the alpha subunit. The polypeptide is Succinate--CoA ligase [ADP-forming] subunit beta (Bacillus cereus (strain ATCC 14579 / DSM 31 / CCUG 7414 / JCM 2152 / NBRC 15305 / NCIMB 9373 / NCTC 2599 / NRRL B-3711)).